We begin with the raw amino-acid sequence, 317 residues long: Apolipoprotein E (317 aa).

A signal peptide spans 1–18 (MKVLWVALVITLLAGCQA). 8 consecutive repeat copies span residues 80–101 (VLMD…EQLG), 102–123 (PVAQ…ARLA), 124–145 (SDMQ…AMMG), 146–167 (HTTD…KRLL), 168–189 (RDAE…EGSE), 190–211 (RSVS…ARAA), 212–233 (TVGT…QKLR), and 234–255 (GRVE…EQLD). Positions 80 to 255 (VLMDETMKEV…HLEEMREQLD (176 aa)) are 8 X 22 AA approximate tandem repeats. The residue at position 143 (Met-143) is a Methionine sulfoxide. Residues 158-168 (HLRKLRKRLLR) form an LDL and other lipoprotein receptors binding region. Residue 162 to 165 (LRKR) participates in heparin binding. The tract at residues 210–290 (AATVGTLASQ…SWFEPLVEDM (81 aa)) is lipid-binding and lipoprotein association. 229–236 (HQKLRGRV) provides a ligand contact to heparin. Positions 266-317 (TQMRLQAEAFQARLKSWFEPLVEDMQRQWAGLVEKVQLAMATSSTSAPSENH) are homooligomerization. Residues 278–290 (RLKSWFEPLVEDM) form a specificity for association with VLDL region.

It belongs to the apolipoprotein A1/A4/E family. In terms of assembly, homotetramer. May interact with ABCA1; functionally associated with ABCA1 in the biogenesis of HDLs. May interact with APP/A4 amyloid-beta peptide; the interaction is extremely stable in vitro but its physiological significance is unclear. May interact with MAPT. May interact with MAP2. In the cerebrospinal fluid, interacts with secreted SORL1. Interacts with PMEL; this allows the loading of PMEL luminal fragment on ILVs to induce fibril nucleation. APOE exists as multiple glycosylated and sialylated glycoforms within cells and in plasma. The extent of glycosylation and sialylation are tissue and context specific. Post-translationally, glycated in plasma VLDL. In terms of processing, phosphorylated by FAM20C in the extracellular medium.

It localises to the secreted. Its subcellular location is the extracellular space. The protein localises to the extracellular matrix. It is found in the extracellular vesicle. The protein resides in the endosome. It localises to the multivesicular body. APOE is an apolipoprotein, a protein associating with lipid particles, that mainly functions in lipoprotein-mediated lipid transport between organs via the plasma and interstitial fluids. APOE is a core component of plasma lipoproteins and is involved in their production, conversion and clearance. Apolipoproteins are amphipathic molecules that interact both with lipids of the lipoprotein particle core and the aqueous environment of the plasma. As such, APOE associates with chylomicrons, chylomicron remnants, very low density lipoproteins (VLDL) and intermediate density lipoproteins (IDL) but shows a preferential binding to high-density lipoproteins (HDL). It also binds a wide range of cellular receptors including the LDL receptor/LDLR and the very low-density lipoprotein receptor/VLDLR that mediate the cellular uptake of the APOE-containing lipoprotein particles. Finally, APOE also has a heparin-binding activity and binds heparan-sulfate proteoglycans on the surface of cells, a property that supports the capture and the receptor-mediated uptake of APOE-containing lipoproteins by cells. This is Apolipoprotein E (APOE) from Physeter macrocephalus (Sperm whale).